A 199-amino-acid polypeptide reads, in one-letter code: Recombination protein RecR (199 aa).

The segment at 58–73 (CKVCTNLTDQEVCNIC) adopts a C4-type zinc-finger fold. A Toprim domain is found at 81 to 176 (LLICVVEDPR…KVSRIAHGIP (96 aa)).

It belongs to the RecR family.

Functionally, may play a role in DNA repair. It seems to be involved in an RecBC-independent recombinational process of DNA repair. It may act with RecF and RecO. This Alkaliphilus oremlandii (strain OhILAs) (Clostridium oremlandii (strain OhILAs)) protein is Recombination protein RecR.